We begin with the raw amino-acid sequence, 222 residues long: Kinetochore protein Spc25 (222 aa).

Residues 51–86 (RHQRKVGKLQKVLMERREELDKRVSFIEELDRELEA) are a coiled coil.

The protein belongs to the SPC25 family. Component of the Ndc80 complex, which is composed of Ndc80, Nuf2 and Spc25.

Its subcellular location is the nucleus. The protein resides in the chromosome. The protein localises to the centromere. It localises to the kinetochore. Functionally, acts as a component of the essential kinetochore-associated Ndc80 complex, which is required for chromosome segregation and spindle checkpoint activity during meiosis and mitosis. Required for kinetochore integrity and the organization of stable microtubule binding sites in the outer plate of the kinetochore. Participates in SAC signaling that responds specifically to disruptions in spindle microtubule dynamics. The NDC80 complex synergistically enhances the affinity of the SKA1 complex for microtubules and may allow the NDC80 complex to track depolymerizing microtubules. The protein is Kinetochore protein Spc25 of Drosophila melanogaster (Fruit fly).